We begin with the raw amino-acid sequence, 388 residues long: Probable proton-coupled zinc antiporter SLC30A3 (388 aa).

The segment at 1 to 46 (MEPSPAAGGLETTRLVSPRDRGGAGGSLRLKSLFTEPSEPLPEESK) is disordered. At 1 to 75 (MEPSPAAGGL…TPERLHARRQ (75 aa)) the chain is on the cytoplasmic side. Residues 76-96 (LYAACAVCFVFMAGEVVGGYL) form a helical membrane-spanning segment. The Lumenal segment spans residues 97–105 (AHSLAIMTD). The chain crosses the membrane as a helical span at residues 106–126 (AAHLLADVGSMMGSLFSLWLS). Residues His-108 and Asp-112 each contribute to the Zn(2+) site. Over 127–145 (TRPATRTMTFGWHRSETLG) the chain is Cytoplasmic. Residues 146 to 166 (ALASVVSLWMVTGILLYLAFV) traverse the membrane as a helical segment. Topologically, residues 167-177 (RLLHSDYHIEG) are lumenal. The helical transmembrane segment at 178 to 198 (GAMLLTASIAVCANLLMAFVL) threads the bilayer. Residues 199–235 (HQAGPPHSHGSRGAEYAPLEEGPEEPLPLGNTSVRAA) lie on the Cytoplasmic side of the membrane. A helical transmembrane segment spans residues 236–256 (FVHVLGDLLQSFGVLAASILI). Residues His-238 and Asp-242 each coordinate Zn(2+). Residues 257–264 (YFKPQYKA) are Lumenal-facing. The helical transmembrane segment at 265 to 285 (ADPISTFLFSICALGSTAPTL) threads the bilayer. Topologically, residues 286 to 388 (RDVLRILMEG…CLRCQEPPQA (103 aa)) are cytoplasmic. Residue Tyr-357 forms a Dityrosine (Tyr-Tyr) (interchain with Y-372) linkage. Tyr-372 participates in a covalent cross-link: Dityrosine (Tyr-Tyr) (interchain with Y-357).

This sequence belongs to the cation diffusion facilitator (CDF) transporter (TC 2.A.4) family. SLC30A subfamily. As to quaternary structure, homodimer; dityrosine-linked. Homodimerization seems specific of the human protein and enhances the zinc transport efficiency. Interacts with TMEM163. In terms of processing, homodimerization through dityrosine bonds is stimulated by oxidative stress.

It localises to the cytoplasmic vesicle. The protein localises to the secretory vesicle. Its subcellular location is the synaptic vesicle membrane. It is found in the synapse. The protein resides in the synaptosome. It localises to the late endosome membrane. The protein localises to the lysosome membrane. It catalyses the reaction Zn(2+)(in) + 2 H(+)(out) = Zn(2+)(out) + 2 H(+)(in). In terms of biological role, probable proton-coupled zinc ion antiporter mediating the import of zinc from cytoplasm into synaptic vesicles and participating to cellular zinc ion homeostasis in the brain. In Homo sapiens (Human), this protein is Probable proton-coupled zinc antiporter SLC30A3.